The primary structure comprises 275 residues: Trans-aconitate 2-methyltransferase (275 aa).

The protein belongs to the methyltransferase superfamily. Tam family.

The protein resides in the cytoplasm. The catalysed reaction is trans-aconitate + S-adenosyl-L-methionine = (E)-3-(methoxycarbonyl)pent-2-enedioate + S-adenosyl-L-homocysteine. Functionally, catalyzes the S-adenosylmethionine monomethyl esterification of trans-aconitate. This Pseudomonas paraeruginosa (strain DSM 24068 / PA7) (Pseudomonas aeruginosa (strain PA7)) protein is Trans-aconitate 2-methyltransferase.